The chain runs to 267 residues: Cytokinesis defective protein 7 (267 aa).

The segment at 244 to 267 is disordered; that stretch reads RNQADQSILPPSGDQQHHRSELHA. The span at 258–267 shows a compositional bias: basic and acidic residues; that stretch reads QQHHRSELHA.

The sequence is that of Cytokinesis defective protein 7 from Caenorhabditis elegans.